Consider the following 358-residue polypeptide: Vascular endothelial growth factor D (358 aa).

Positions 1–21 (MYGEWGMGNILMMFHVYLVQG) are cleaved as a signal peptide. The propeptide occupies 22-93 (FRSEHGPVKD…SRSASHRSTR (72 aa)). Disulfide bonds link Cys116/Cys158, Cys147/Cys194, and Cys151/Cys196. Asn160 and Asn190 each carry an N-linked (GlcNAc...) asparagine glycan. Residues 211-358 (SIQTPEEDEC…AQGLYSQENP (148 aa)) constitute a propeptide that is removed on maturation. The 1; approximate repeat unit spans residues 227–242 (CPIDMLWDNTKCKCVL). The 4 X 16 AA repeats of C-X(10)-C-X-C-X(1,3)-C stretch occupies residues 227–323 (CPIDMLWDNT…PDTCSCEDRC (97 aa)). 3 repeat units span residues 263-278 (CGPH…ECVC), 282-298 (CPGD…CFEC), and 306-323 (CQKH…EDRC). Asn292 is a glycosylation site (N-linked (GlcNAc...) asparagine).

Belongs to the PDGF/VEGF growth factor family. As to quaternary structure, homodimer; non-covalent and antiparallel. In terms of processing, undergoes a complex proteolytic maturation which generates a variety of processed secreted forms with increased activity toward VEGFR-3 and VEGFR-2. VEGF-D first form an antiparallel homodimer linked by disulfide bonds before secretion. The fully processed VEGF-D is composed mostly of two VEGF homology domains (VHDs) bound by non-covalent interactions. As to expression, highly expressed in fetal and adult lung.

The protein localises to the secreted. Growth factor active in angiogenesis, lymphangiogenesis and endothelial cell growth, stimulating their proliferation and migration and also has effects on the permeability of blood vessels. May function in the formation of the venous and lymphatic vascular systems during embryogenesis, and also in the maintenance of differentiated lymphatic endothelium in adults. Binds and activates VEGFR-3 (Flt4) receptor. The protein is Vascular endothelial growth factor D of Mus musculus (Mouse).